Consider the following 425-residue polypeptide: UPF0597 protein UNCMA_16400 (425 aa).

The protein belongs to the UPF0597 family.

The chain is UPF0597 protein UNCMA_16400 from Methanocella arvoryzae (strain DSM 22066 / NBRC 105507 / MRE50).